The following is a 101-amino-acid chain: Small ribosomal subunit protein uS14 (101 aa).

Belongs to the universal ribosomal protein uS14 family. Part of the 30S ribosomal subunit. Contacts proteins S3 and S10.

In terms of biological role, binds 16S rRNA, required for the assembly of 30S particles and may also be responsible for determining the conformation of the 16S rRNA at the A site. This Sodalis glossinidius (strain morsitans) protein is Small ribosomal subunit protein uS14.